Here is a 436-residue protein sequence, read N- to C-terminus: mRNA cap guanine-N(7) methyltransferase (436 aa).

The segment at 1–50 (MSTKPEKPIWMSQEDYDRQYGSITGDESSTVSKKDSKVTANAPGDGNGSL) is disordered. The mRNA cap 0 methyltransferase domain occupies 141 to 424 (SPIIKLRNFN…FYTMFAFRKV (284 aa)). 150-151 (NN) contacts mRNA. 6 residues coordinate S-adenosyl-L-methionine: lysine 154, glycine 172, aspartate 194, aspartate 223, glutamine 249, and tyrosine 254.

This sequence belongs to the class I-like SAM-binding methyltransferase superfamily. mRNA cap 0 methyltransferase family.

It is found in the nucleus. It carries out the reaction a 5'-end (5'-triphosphoguanosine)-ribonucleoside in mRNA + S-adenosyl-L-methionine = a 5'-end (N(7)-methyl 5'-triphosphoguanosine)-ribonucleoside in mRNA + S-adenosyl-L-homocysteine. Functionally, responsible for methylating the 5'-cap structure of mRNAs. The sequence is that of mRNA cap guanine-N(7) methyltransferase (ABD1) from Saccharomyces cerevisiae (strain ATCC 204508 / S288c) (Baker's yeast).